The sequence spans 232 residues: MRNILPFLTRIPVKGDFEKARNELWAFPLVSLVSSIIPIAILYLRIPLANVLALLSLYFVIGLLHLDGLADWADGIMVKGDRERKIKAMKDLNTGIAGVFAVVVVLFLQVYSLSMLPFYAIYIAELNSKFSMLLGLATKKPLGQGLGAYFMEGMNGRQLAIGVVLYVLLYLPVVIYDPSALFGVMGLVFAWYVIRLSLENFGGINGDCLGAMAEITRAGTLVILSFSLCFTT.

Transmembrane regions (helical) follow at residues 24–44, 46–66, 96–116, 117–137, 153–173, 174–194, and 210–230; these read LWAF…ILYL, IPLA…LLHL, IAGV…LSML, PFYA…LGLA, GMNG…YLPV, VIYD…WYVI, and GAMA…SLCF.

It belongs to the CobS family. Mg(2+) is required as a cofactor.

It is found in the cell membrane. The enzyme catalyses alpha-ribazole + adenosylcob(III)inamide-GDP = adenosylcob(III)alamin + GMP + H(+). The catalysed reaction is alpha-ribazole 5'-phosphate + adenosylcob(III)inamide-GDP = adenosylcob(III)alamin 5'-phosphate + GMP + H(+). The protein operates within cofactor biosynthesis; adenosylcobalamin biosynthesis; adenosylcobalamin from cob(II)yrinate a,c-diamide: step 7/7. Its function is as follows. Joins adenosylcobinamide-GDP and alpha-ribazole to generate adenosylcobalamin (Ado-cobalamin). Also synthesizes adenosylcobalamin 5'-phosphate from adenosylcobinamide-GDP and alpha-ribazole 5'-phosphate. This Pyrococcus abyssi (strain GE5 / Orsay) protein is Adenosylcobinamide-GDP ribazoletransferase.